Consider the following 376-residue polypeptide: Deoxyguanosinetriphosphate triphosphohydrolase-like protein (376 aa).

A disordered region spans residues 1 to 32 (MEPSFAPYAAHSSQTRGRVHREAPAAPRSEFQ). The HD domain occupies 65–196 (RLTHSIEVAQ…ANLADEIAYN (132 aa)).

The protein belongs to the dGTPase family. Type 2 subfamily.

The sequence is that of Deoxyguanosinetriphosphate triphosphohydrolase-like protein from Thiobacillus denitrificans (strain ATCC 25259 / T1).